Reading from the N-terminus, the 914-residue chain is Valine--tRNA ligase (914 aa).

Residues 47-57 carry the 'HIGH' region motif; that stretch reads PYPTGELHMGH. The short motif at 552 to 556 is the 'KMSKS' region element; that stretch reads KMSKS. Lys-555 is a binding site for ATP.

Belongs to the class-I aminoacyl-tRNA synthetase family. ValS type 2 subfamily.

The protein localises to the cytoplasm. The enzyme catalyses tRNA(Val) + L-valine + ATP = L-valyl-tRNA(Val) + AMP + diphosphate. Its function is as follows. Catalyzes the attachment of valine to tRNA(Val). As ValRS can inadvertently accommodate and process structurally similar amino acids such as threonine, to avoid such errors, it has a 'posttransfer' editing activity that hydrolyzes mischarged Thr-tRNA(Val) in a tRNA-dependent manner. The polypeptide is Valine--tRNA ligase (Methanopyrus kandleri (strain AV19 / DSM 6324 / JCM 9639 / NBRC 100938)).